The chain runs to 414 residues: Esterase FrsA (414 aa).

The protein belongs to the FrsA family.

It catalyses the reaction a carboxylic ester + H2O = an alcohol + a carboxylate + H(+). Functionally, catalyzes the hydrolysis of esters. The polypeptide is Esterase FrsA (Salmonella agona (strain SL483)).